A 319-amino-acid polypeptide reads, in one-letter code: CBBY-like protein (319 aa).

The N-terminal 65 residues, Met-1–Thr-65, are a transit peptide targeting the chloroplast. The active-site Nucleophile is Asp-82. Mg(2+) is bound by residues Asp-82 and Asp-84. Substrate is bound at residue Asp-82. The Proton donor role is filled by Asp-84. Substrate contacts are provided by residues Glu-91, Gly-125–Arg-129, His-158–Lys-161, and Ser-198–Ala-204. Position 258 (Asp-258) interacts with Mg(2+).

This sequence belongs to the HAD-like hydrolase superfamily. DOG/GPP family. The cofactor is Mg(2+).

It localises to the plastid. Its subcellular location is the chloroplast. The enzyme catalyses D-xylulose 1,5-bisphosphate + H2O = D-xylulose 5-phosphate + phosphate. In terms of biological role, highly selective xylulose-1,5-bisphosphate (XuBP) phosphatase. Also shows activity towards ribulose-1,5-bisphosphate (RuBP) and fructose-1,6-bisphosphate (FBP), but not towards fructose-6-phosphate (F6P) or ribulose-5-phosphate (Ru5P). Degrades xylulose-1,5-bisphosphate, a potent inhibitor of rubisco produced by the rubisco itself. The protein is CBBY-like protein of Arabidopsis thaliana (Mouse-ear cress).